Reading from the N-terminus, the 182-residue chain is Large ribosomal subunit protein uL6 (182 aa).

This sequence belongs to the universal ribosomal protein uL6 family. Part of the 50S ribosomal subunit.

Functionally, this protein binds to the 23S rRNA, and is important in its secondary structure. It is located near the subunit interface in the base of the L7/L12 stalk, and near the tRNA binding site of the peptidyltransferase center. The chain is Large ribosomal subunit protein uL6 from Haloquadratum walsbyi (strain DSM 16790 / HBSQ001).